We begin with the raw amino-acid sequence, 103 residues long: Large ribosomal subunit protein uL24 (103 aa).

It belongs to the universal ribosomal protein uL24 family. Part of the 50S ribosomal subunit.

Its function is as follows. One of two assembly initiator proteins, it binds directly to the 5'-end of the 23S rRNA, where it nucleates assembly of the 50S subunit. One of the proteins that surrounds the polypeptide exit tunnel on the outside of the subunit. The sequence is that of Large ribosomal subunit protein uL24 from Exiguobacterium sibiricum (strain DSM 17290 / CCUG 55495 / CIP 109462 / JCM 13490 / 255-15).